Here is a 1137-residue protein sequence, read N- to C-terminus: Calcium-activated potassium channel subunit alpha-1 (1137 aa).

At 1 to 44 the chain is on the extracellular side; it reads MSNNINANNLNTDSSSSPVNVPKMDALIIPVTMEVPCDSRGQRM. A helical transmembrane segment spans residues 45–65; that stretch reads WWAFLASSMVTFFGGLFIILL. The Cytoplasmic segment spans residues 66-137; sequence WRTLKYLWTV…MISAQTLTGR (72 aa). The helical transmembrane segment at 138–158 threads the bilayer; it reads VLVVLVFALSIGALVIYFIDS. The Extracellular segment spans residues 159-173; that stretch reads SNPIESCQNFYKDFT. A helical transmembrane segment spans residues 174 to 194; it reads LQIDMAFNVFFLLYFGLRFIA. Residues 195–198 lie on the Cytoplasmic side of the membrane; the sequence is ANDK. The chain crosses the membrane as a helical span at residues 199–219; the sequence is LWFWLEVNSVVDFFTVPPVFV. At 220-223 the chain is on the extracellular side; that stretch reads SVYL. Residues 224-244 traverse the membrane as a helical; Voltage-sensor segment; it reads NRSWLGLRFLRALRLIQFSEI. Topologically, residues 245 to 259 are cytoplasmic; sequence LQFLNILKTSNSIKL. The helical transmembrane segment at 260 to 280 threads the bilayer; that stretch reads VNLCSIFISTWLTAAGFIHLV. Residues 281-294 lie on the Extracellular side of the membrane; sequence ENSGDPWENFQNNQ. The pore-forming intramembrane region spans 295–317; sequence QLTYWECVYLLMVTMSTVGYGDV. The Selectivity for potassium motif lies at 311 to 314; that stretch reads TVGY. At 318–326 the chain is on the extracellular side; that stretch reads YAKTTLGRL. A helical transmembrane segment spans residues 327–347; it reads FMVFFILGGLAMFASYVPEII. At 348–1137 the chain is on the cytoplasmic side; it reads ELIGNRKKYG…KQKYVQEDRL (790 aa). Residues 366 to 508 form the RCK N-terminal 1 domain; that stretch reads RKHIVVCGHI…WNWKEGDDAI (143 aa). The Mg(2+) site is built by E398, Q421, and E423. Residues 515–535 are segment S7; it reads LGFIAQSCLAPGLSTMLANLF. Residues 572-592 form a segment S8 region; sequence LSFPAVCELVFAKLKLLMIAI. The heme-binding motif stretch occupies residues 636 to 640; the sequence is CKACH. Residues 660 to 688 are disordered; sequence EQPSTLSPKKKQRNGGMRNSPNSSPKLMR. Positions 738 to 758 are segment S9; that stretch reads VLSGHVVVCIFGDVKSALIGL. An RCK N-terminal 2 domain is found at 740-884; the sequence is SGHVVVCIFG…MDRSSPDNSP (145 aa). A Calcium bowl motif is present at residues 904 to 926; the sequence is TELVNDSNVQFLDQDDDDDPDTE. Q913, D916, D919, and D921 together coordinate Ca(2+). The segment at 933–953 is segment S10; it reads FACGTAFAVSVLDSLMSATYF. Positions 1088–1112 are enriched in low complexity; that stretch reads ASLSHSSHSSYSSSKKSSSVHSIPS. A disordered region spans residues 1088 to 1137; it reads ASLSHSSHSSYSSSKKSSSVHSIPSTANRPNRTKTRDSREKQKYVQEDRL. The segment covering 1121–1137 has biased composition (basic and acidic residues); the sequence is KTRDSREKQKYVQEDRL.

This sequence belongs to the potassium channel family. Calcium-activated (TC 1.A.1.3) subfamily. KCa1.1/KCNMA1 sub-subfamily. In terms of assembly, homotetramer; which constitutes the calcium-activated potassium channel.

It localises to the cell membrane. It catalyses the reaction K(+)(in) = K(+)(out). Ethanol and carbon monoxide-bound heme increase channel activation. Heme inhibits channel activation. Functionally, potassium channel activated by both membrane depolarization or increase in cytosolic Ca(2+) that mediates export of K(+). It is also activated by the concentration of cytosolic Mg(2+). Its activation dampens the excitatory events that elevate the cytosolic Ca(2+) concentration and/or depolarize the cell membrane. It therefore contributes to repolarization of the membrane potential. Plays a key role in controlling excitability in a number of systems, such as regulation of the contraction of smooth muscle, the tuning of hair cells in the cochlea, regulation of transmitter release, and innate immunity. In smooth muscles, its activation by high level of Ca(2+), caused by ryanodine receptors in the sarcoplasmic reticulum, regulates the membrane potential. In cochlea cells, its number and kinetic properties partly determine the characteristic frequency of each hair cell and thereby helps to establish a tonotopic map. Highly sensitive to both iberiotoxin (IbTx) and charybdotoxin (CTX). In Gallus gallus (Chicken), this protein is Calcium-activated potassium channel subunit alpha-1 (KCNMA1).